The following is a 248-amino-acid chain: 5'-nucleotidase SurE (248 aa).

The a divalent metal cation site is built by Asp-8, Asp-9, Ser-39, and Asn-91.

The protein belongs to the SurE nucleotidase family. Requires a divalent metal cation as cofactor.

The protein resides in the cytoplasm. The catalysed reaction is a ribonucleoside 5'-phosphate + H2O = a ribonucleoside + phosphate. In terms of biological role, nucleotidase that shows phosphatase activity on nucleoside 5'-monophosphates. The protein is 5'-nucleotidase SurE of Neisseria meningitidis serogroup C / serotype 2a (strain ATCC 700532 / DSM 15464 / FAM18).